Here is a 116-residue protein sequence, read N- to C-terminus: MNNARLYQVLKGPVFSEKSQLLGDSLGVQVFKVDNNATKREIKKAVELMFEGVEVTKVNTLNVKGKTKRFGRTVGRRNDYKKAYVTLKAGQDVQMADAGEEIADNAASTSETANNE.

Belongs to the universal ribosomal protein uL23 family. As to quaternary structure, part of the 50S ribosomal subunit. Contacts protein L29, and trigger factor when it is bound to the ribosome.

In terms of biological role, one of the early assembly proteins it binds 23S rRNA. One of the proteins that surrounds the polypeptide exit tunnel on the outside of the ribosome. Forms the main docking site for trigger factor binding to the ribosome. The chain is Large ribosomal subunit protein uL23 from Psychrobacter sp. (strain PRwf-1).